The following is a 121-amino-acid chain: Large ribosomal subunit protein bL12 (121 aa).

This sequence belongs to the bacterial ribosomal protein bL12 family. In terms of assembly, homodimer. Part of the ribosomal stalk of the 50S ribosomal subunit. Forms a multimeric L10(L12)X complex, where L10 forms an elongated spine to which 2 to 4 L12 dimers bind in a sequential fashion. Binds GTP-bound translation factors.

Forms part of the ribosomal stalk which helps the ribosome interact with GTP-bound translation factors. Is thus essential for accurate translation. In Malacoplasma penetrans (strain HF-2) (Mycoplasma penetrans), this protein is Large ribosomal subunit protein bL12.